The sequence spans 627 residues: tRNA uridine 5-carboxymethylaminomethyl modification enzyme MnmG (627 aa).

Residues 13 to 18 (GGGHAG), Val125, and Ser180 contribute to the FAD site. Residue 274-288 (GPRYCPSIEDKVVRF) participates in NAD(+) binding. An FAD-binding site is contributed by Gln371.

The protein belongs to the MnmG family. Homodimer. Heterotetramer of two MnmE and two MnmG subunits. FAD serves as cofactor.

It is found in the cytoplasm. Its function is as follows. NAD-binding protein involved in the addition of a carboxymethylaminomethyl (cmnm) group at the wobble position (U34) of certain tRNAs, forming tRNA-cmnm(5)s(2)U34. This chain is tRNA uridine 5-carboxymethylaminomethyl modification enzyme MnmG, found in Francisella tularensis subsp. novicida (strain U112).